A 240-amino-acid polypeptide reads, in one-letter code: UDP-2,3-diacylglucosamine hydrolase (240 aa).

Asp-8, His-10, Asp-41, Asn-78, and His-113 together coordinate Mn(2+). 78 to 79 (NR) lines the substrate pocket. Residues Asp-121, Ser-159, Asn-163, Lys-166, and His-194 each coordinate substrate. Positions 194 and 196 each coordinate Mn(2+).

This sequence belongs to the LpxH family. Requires Mn(2+) as cofactor.

It is found in the cell inner membrane. It catalyses the reaction UDP-2-N,3-O-bis[(3R)-3-hydroxytetradecanoyl]-alpha-D-glucosamine + H2O = 2-N,3-O-bis[(3R)-3-hydroxytetradecanoyl]-alpha-D-glucosaminyl 1-phosphate + UMP + 2 H(+). It participates in glycolipid biosynthesis; lipid IV(A) biosynthesis; lipid IV(A) from (3R)-3-hydroxytetradecanoyl-[acyl-carrier-protein] and UDP-N-acetyl-alpha-D-glucosamine: step 4/6. In terms of biological role, hydrolyzes the pyrophosphate bond of UDP-2,3-diacylglucosamine to yield 2,3-diacylglucosamine 1-phosphate (lipid X) and UMP by catalyzing the attack of water at the alpha-P atom. Involved in the biosynthesis of lipid A, a phosphorylated glycolipid that anchors the lipopolysaccharide to the outer membrane of the cell. The chain is UDP-2,3-diacylglucosamine hydrolase from Shewanella baltica (strain OS195).